The primary structure comprises 129 residues: Ribonuclease VapC12 (129 aa).

Aspartate 5 and aspartate 94 together coordinate Mg(2+).

It belongs to the PINc/VapC protein family. The cofactor is Mg(2+).

Toxic component of a type II toxin-antitoxin (TA) system. An RNase. The cognate antitoxin is VapB12. The sequence is that of Ribonuclease VapC12 from Mycobacterium tuberculosis (strain CDC 1551 / Oshkosh).